Reading from the N-terminus, the 475-residue chain is 3-isopropylmalate dehydratase large subunit (475 aa).

[4Fe-4S] cluster contacts are provided by Cys-353, Cys-414, and Cys-417.

Belongs to the aconitase/IPM isomerase family. LeuC type 1 subfamily. In terms of assembly, heterodimer of LeuC and LeuD. [4Fe-4S] cluster serves as cofactor.

The enzyme catalyses (2R,3S)-3-isopropylmalate = (2S)-2-isopropylmalate. It participates in amino-acid biosynthesis; L-leucine biosynthesis; L-leucine from 3-methyl-2-oxobutanoate: step 2/4. Functionally, catalyzes the isomerization between 2-isopropylmalate and 3-isopropylmalate, via the formation of 2-isopropylmaleate. In Ectopseudomonas mendocina (strain ymp) (Pseudomonas mendocina), this protein is 3-isopropylmalate dehydratase large subunit.